A 430-amino-acid chain; its full sequence is Tol-Pal system protein TolB (430 aa).

The first 21 residues, 1-21 (MKQAFRVALGFLVLWASVLHA), serve as a signal peptide directing secretion.

Belongs to the TolB family. As to quaternary structure, the Tol-Pal system is composed of five core proteins: the inner membrane proteins TolA, TolQ and TolR, the periplasmic protein TolB and the outer membrane protein Pal. They form a network linking the inner and outer membranes and the peptidoglycan layer.

It is found in the periplasm. In terms of biological role, part of the Tol-Pal system, which plays a role in outer membrane invagination during cell division and is important for maintaining outer membrane integrity. TolB occupies a key intermediary position in the Tol-Pal system because it communicates directly with both membrane-embedded components, Pal in the outer membrane and TolA in the inner membrane. The protein is Tol-Pal system protein TolB of Yersinia pestis.